A 115-amino-acid polypeptide reads, in one-letter code: NADH-ubiquinone oxidoreductase chain 3 (115 aa).

Helical transmembrane passes span 4–24 (LTAL…AFWL), 55–75 (FFLV…LLPL), and 83–103 (YINI…LGLA).

This sequence belongs to the complex I subunit 3 family. Core subunit of respiratory chain NADH dehydrogenase (Complex I) which is composed of 45 different subunits. Interacts with TMEM186. Interacts with TMEM242.

It localises to the mitochondrion inner membrane. The catalysed reaction is a ubiquinone + NADH + 5 H(+)(in) = a ubiquinol + NAD(+) + 4 H(+)(out). Core subunit of the mitochondrial membrane respiratory chain NADH dehydrogenase (Complex I) which catalyzes electron transfer from NADH through the respiratory chain, using ubiquinone as an electron acceptor. Essential for the catalytic activity of complex I. The chain is NADH-ubiquinone oxidoreductase chain 3 from Peromyscus polionotus (Oldfield mouse).